A 95-amino-acid polypeptide reads, in one-letter code: Nodulin (95 aa).

The sequence is that of Nodulin from Striga hermonthica (Purple witchweed).